Here is a 765-residue protein sequence, read N- to C-terminus: Polyadenylate-binding protein, cytoplasmic and nuclear (765 aa).

The segment covering 1-37 (MSADASTTPAADSNVTSTPETSTTPAAPAPEVTAVES) has biased composition (low complexity). The disordered stretch occupies residues 1–49 (MSADASTTPAADSNVTSTPETSTTPAAPAPEVTAVESTTAPNASQPHSA). The segment covering 38–48 (TTAPNASQPHS) has biased composition (polar residues). RRM domains follow at residues 49-127 (ASLY…WSQR), 137-214 (GNVF…HHIS), 230-307 (TNVY…RAQK), and 333-470 (VNLY…LAQR). Disordered regions lie at residues 364 to 427 (VMRD…ADKK) and 619 to 657 (PGYG…PEEA). Residues 377–427 (ESDKEKENKEATKENEKESSEAEKAEKTEEKPADSGDEKKEDKESKKADKK) show a composition bias toward basic and acidic residues. A compositionally biased stretch (low complexity) spans 628-637 (VPVQQGQMRP). In terms of domain architecture, PABC spans 659 to 736 (AGGLTAQALS…ALNVYDEYMK (78 aa)). Residues 737–765 (NKGGESEATGEAAKPKEAAKETSTEENKS) form a disordered region. A compositionally biased stretch (basic and acidic residues) spans 749 to 765 (AKPKEAAKETSTEENKS).

This sequence belongs to the polyadenylate-binding protein type-1 family.

It localises to the cytoplasm. The protein resides in the nucleus. Functionally, binds the poly(A) tail of mRNA. Appears to be an important mediator of the multiple roles of the poly(A) tail in mRNA biogenesis, stability and translation. In the nucleus, involved in both mRNA cleavage and polyadenylation. Is also required for efficient mRNA export to the cytoplasm. Acts in concert with a poly(A)-specific nuclease (PAN) to affect poly(A) tail shortening, which may occur concomitantly with either nucleocytoplasmic mRNA transport or translational initiation. In the cytoplasm, stimulates translation initiation and regulates mRNA decay through translation termination-coupled poly(A) shortening, probably mediated by PAN. The polypeptide is Polyadenylate-binding protein, cytoplasmic and nuclear (pab1) (Aspergillus oryzae (strain ATCC 42149 / RIB 40) (Yellow koji mold)).